Consider the following 362-residue polypeptide: GTPase Obg (362 aa).

The Obg domain occupies 1–159 (MKFIDEARIE…RKLKLELKVL (159 aa)). Residues 129–148 (HFKSSTNRAPRQKTNGKEGE) form a disordered region. Residues 130-141 (FKSSTNRAPRQK) show a composition bias toward polar residues. Residues 160-334 (ADVGLLGMPN…LCYALQDYLD (175 aa)) form the OBG-type G domain. GTP contacts are provided by residues 166–173 (GMPNAGKS), 191–195 (FTTLH), 213–216 (DIPG), 284–287 (NKVD), and 315–317 (SAL). Residues serine 173 and threonine 193 each contribute to the Mg(2+) site. The tract at residues 340-362 (RDDAEERAADPRYQDQAADKSPD) is disordered.

Belongs to the TRAFAC class OBG-HflX-like GTPase superfamily. OBG GTPase family. Monomer. Requires Mg(2+) as cofactor.

The protein resides in the cytoplasm. Functionally, an essential GTPase which binds GTP, GDP and possibly (p)ppGpp with moderate affinity, with high nucleotide exchange rates and a fairly low GTP hydrolysis rate. Plays a role in control of the cell cycle, stress response, ribosome biogenesis and in those bacteria that undergo differentiation, in morphogenesis control. The chain is GTPase Obg from Polynucleobacter asymbioticus (strain DSM 18221 / CIP 109841 / QLW-P1DMWA-1) (Polynucleobacter necessarius subsp. asymbioticus).